The sequence spans 59 residues: UPF0434 protein HDEF_0234 (59 aa).

This sequence belongs to the UPF0434 family.

The protein is UPF0434 protein HDEF_0234 of Hamiltonella defensa subsp. Acyrthosiphon pisum (strain 5AT).